The following is a 399-amino-acid chain: Carbamoyl phosphate synthase arginine-specific small chain (399 aa).

A Glutamine amidotransferase type-1 domain is found at 187–379 (DVALVDCGVK…VERMRCYRKL (193 aa)). Cys267 (nucleophile) is an active-site residue. Catalysis depends on residues His352 and Glu354.

The protein belongs to the CarA family. In terms of assembly, heterodimer composed of 2 chains; the small (or glutamine) chain promotes the hydrolysis of glutamine to ammonia, which is used by the large (or ammonia) chain to synthesize carbamoyl phosphate.

The protein localises to the cytoplasm. It carries out the reaction hydrogencarbonate + L-glutamine + 2 ATP + H2O = carbamoyl phosphate + L-glutamate + 2 ADP + phosphate + 2 H(+). The enzyme catalyses L-glutamine + H2O = L-glutamate + NH4(+). The protein operates within amino-acid biosynthesis; L-arginine biosynthesis; carbamoyl phosphate from bicarbonate: step 1/1. Its function is as follows. Small subunit of the arginine-specific carbamoyl phosphate synthase (CPSase). CPSase catalyzes the formation of carbamoyl phosphate from the ammonia moiety of glutamine, carbonate, and phosphate donated by ATP, constituting the first step of 2 biosynthetic pathways, one leading to arginine and/or urea and the other to pyrimidine nucleotides. The small subunit (glutamine amidotransferase) binds and cleaves glutamine to supply the large subunit with the substrate ammonia. This chain is Carbamoyl phosphate synthase arginine-specific small chain (CPA1), found in Eremothecium gossypii (strain ATCC 10895 / CBS 109.51 / FGSC 9923 / NRRL Y-1056) (Yeast).